Consider the following 321-residue polypeptide: Torsin-2A (321 aa).

Residues 1-27 form the signal peptide; the sequence is MAVARHGCPPWGSILGLLVLALAAAAA. Residue 93–100 participates in ATP binding; the sequence is GWTGTGKS. An N-linked (GlcNAc...) asparagine glycan is attached at asparagine 149.

Belongs to the ClpA/ClpB family. Torsin subfamily. In terms of assembly, homohexamer. Interacts with TOR1AIP1.

It is found in the endoplasmic reticulum lumen. The chain is Torsin-2A (Tor2a) from Rattus norvegicus (Rat).